Here is a 151-residue protein sequence, read N- to C-terminus: Acidic phospholipase A2 5 (151 aa).

The signal sequence occupies residues 1–27 (MYPAHLLVLLAVCVSLLGAASIPARPL). Disulfide bonds link cysteine 38/cysteine 104, cysteine 54/cysteine 151, cysteine 56/cysteine 72, cysteine 71/cysteine 132, cysteine 78/cysteine 125, cysteine 88/cysteine 118, and cysteine 111/cysteine 123. Ca(2+) is bound by residues tyrosine 55, glycine 57, and glycine 59. Histidine 75 is an active-site residue. Aspartate 76 is a Ca(2+) binding site. Aspartate 126 is an active-site residue.

It belongs to the phospholipase A2 family. Group I subfamily. D49 sub-subfamily. Ca(2+) serves as cofactor. In terms of tissue distribution, expressed by the venom gland.

The protein resides in the secreted. The catalysed reaction is a 1,2-diacyl-sn-glycero-3-phosphocholine + H2O = a 1-acyl-sn-glycero-3-phosphocholine + a fatty acid + H(+). In terms of biological role, PLA2 catalyzes the calcium-dependent hydrolysis of the 2-acyl groups in 3-sn-phosphoglycerides. This is Acidic phospholipase A2 5 from Tropidechis carinatus (Australian rough-scaled snake).